Consider the following 662-residue polypeptide: Histidine decarboxylase (662 aa).

Substrate-binding residues include tyrosine 81 and histidine 194. At lysine 305 the chain carries N6-(pyridoxal phosphate)lysine.

Belongs to the group II decarboxylase family. Homodimer. The cofactor is pyridoxal 5'-phosphate.

It carries out the reaction L-histidine + H(+) = histamine + CO2. It functions in the pathway amine and polyamine biosynthesis; histamine biosynthesis; histamine from L-histidine: step 1/1. Catalyzes the biosynthesis of histamine from histidine. The sequence is that of Histidine decarboxylase (HDC) from Homo sapiens (Human).